We begin with the raw amino-acid sequence, 908 residues long: NADH-quinone oxidoreductase subunit G (908 aa).

The 82-residue stretch at 2–83 (ATIHVDGKEY…GTFISIDDEE (82 aa)) folds into the 2Fe-2S ferredoxin-type domain. [2Fe-2S] cluster-binding residues include cysteine 34, cysteine 45, cysteine 48, and cysteine 67. The region spanning 83-122 (EAKQFRESVVEWLMTNHPHDCPVCEEGGNCHLQDMTVMTG) is the 4Fe-4S His(Cys)3-ligated-type domain. [4Fe-4S] cluster-binding residues include histidine 99, cysteine 103, cysteine 106, cysteine 112, cysteine 151, cysteine 154, cysteine 157, cysteine 201, cysteine 228, cysteine 231, cysteine 235, and cysteine 263. One can recognise a 4Fe-4S Mo/W bis-MGD-type domain in the interval 221–277 (MQFAPSICQQCSIGCNISPGERYGELRRIENRYNGTVNHYFLCDRGRFGYGYVNLKD).

This sequence belongs to the complex I 75 kDa subunit family. In terms of assembly, composed of 13 different subunits. Subunits NuoCD, E, F, and G constitute the peripheral sector of the complex. Requires [2Fe-2S] cluster as cofactor. It depends on [4Fe-4S] cluster as a cofactor.

The enzyme catalyses a quinone + NADH + 5 H(+)(in) = a quinol + NAD(+) + 4 H(+)(out). In terms of biological role, NDH-1 shuttles electrons from NADH, via FMN and iron-sulfur (Fe-S) centers, to quinones in the respiratory chain. The immediate electron acceptor for the enzyme in this species is believed to be ubiquinone. Couples the redox reaction to proton translocation (for every two electrons transferred, four hydrogen ions are translocated across the cytoplasmic membrane), and thus conserves the redox energy in a proton gradient. The chain is NADH-quinone oxidoreductase subunit G (nuoG) from Salmonella typhi.